The chain runs to 343 residues: MDESGAGRRKEDHIDIVLAGGRVASRLDAGFDRVRFVHCALPELDLDAIDLSTRFLGRPLKAPFLISAMTGGPARAESINAHLAEAAQALGIALGVGSQRIAIEDGSAGGLGADLRRRAPDIALFANLGAAQLLAARGLDAARRAVEMIGADVLVIHLNPLQEAIQQGGDRDWRGVFDRIGSLCVSLSAPVVVKEVGFGLSGAVARRLADCGVAALDVAGAGGTNWALVEGERGTGRSRAVATAFADWGIPTAQAVVEVRAACPDLPLIASGGVRHGVDAAKAIRLGADLVGQAAGTLKAAITSTEAVVEHFSQMTDQLRIACFATGAADLDALRRVPLATMD.

9-10 contacts substrate; sequence RK. FMN contacts are provided by residues Ser-67, 68-70, Ser-98, and Asn-127; that span reads AMT. 98-100 contacts substrate; the sequence is SQR. Gln-162 provides a ligand contact to substrate. Residue Glu-163 coordinates Mg(2+). FMN-binding positions include Lys-194, Thr-224, 273-275, and 294-295; these read GVR and AA.

Belongs to the IPP isomerase type 2 family. As to quaternary structure, homooctamer. Dimer of tetramers. Requires FMN as cofactor. It depends on NADPH as a cofactor. Mg(2+) serves as cofactor.

The protein localises to the cytoplasm. It catalyses the reaction isopentenyl diphosphate = dimethylallyl diphosphate. In terms of biological role, involved in the biosynthesis of isoprenoids. Catalyzes the 1,3-allylic rearrangement of the homoallylic substrate isopentenyl (IPP) to its allylic isomer, dimethylallyl diphosphate (DMAPP). In Xanthobacter autotrophicus (strain ATCC BAA-1158 / Py2), this protein is Isopentenyl-diphosphate delta-isomerase.